The following is a 173-amino-acid chain: Co-chaperone protein HscB homolog (173 aa).

The J domain maps to 3-75 (NPFSLFNLPV…IARATAIIEI (73 aa)).

The protein belongs to the HscB family. As to quaternary structure, interacts with HscA and stimulates its ATPase activity.

Co-chaperone involved in the maturation of iron-sulfur cluster-containing proteins. Seems to help targeting proteins to be folded toward HscA. This is Co-chaperone protein HscB homolog from Haemophilus ducreyi (strain 35000HP / ATCC 700724).